Here is a 198-residue protein sequence, read N- to C-terminus: Adenylyl-sulfate kinase (198 aa).

ATP is bound at residue 31–38; sequence GLSGAGKS. Serine 105 (phosphoserine intermediate) is an active-site residue.

The protein belongs to the APS kinase family.

The enzyme catalyses adenosine 5'-phosphosulfate + ATP = 3'-phosphoadenylyl sulfate + ADP + H(+). Its pathway is sulfur metabolism; hydrogen sulfide biosynthesis; sulfite from sulfate: step 2/3. Catalyzes the synthesis of activated sulfate. This is Adenylyl-sulfate kinase from Shewanella amazonensis (strain ATCC BAA-1098 / SB2B).